The primary structure comprises 229 residues: Large ribosomal subunit protein uL1 (229 aa).

It belongs to the universal ribosomal protein uL1 family. Part of the 50S ribosomal subunit.

In terms of biological role, binds directly to 23S rRNA. The L1 stalk is quite mobile in the ribosome, and is involved in E site tRNA release. Protein L1 is also a translational repressor protein, it controls the translation of the L11 operon by binding to its mRNA. This is Large ribosomal subunit protein uL1 from Clostridium botulinum (strain 657 / Type Ba4).